The chain runs to 303 residues: Aspartate carbamoyltransferase catalytic subunit (303 aa).

Positions 49 and 50 each coordinate carbamoyl phosphate. Residue lysine 77 coordinates L-aspartate. Residues arginine 99, histidine 126, and glutamine 129 each contribute to the carbamoyl phosphate site. The L-aspartate site is built by arginine 159 and arginine 211. Residues serine 252 and proline 253 each coordinate carbamoyl phosphate.

This sequence belongs to the aspartate/ornithine carbamoyltransferase superfamily. ATCase family. In terms of assembly, heterododecamer (2C3:3R2) of six catalytic PyrB chains organized as two trimers (C3), and six regulatory PyrI chains organized as three dimers (R2).

It catalyses the reaction carbamoyl phosphate + L-aspartate = N-carbamoyl-L-aspartate + phosphate + H(+). It participates in pyrimidine metabolism; UMP biosynthesis via de novo pathway; (S)-dihydroorotate from bicarbonate: step 2/3. Its function is as follows. Catalyzes the condensation of carbamoyl phosphate and aspartate to form carbamoyl aspartate and inorganic phosphate, the committed step in the de novo pyrimidine nucleotide biosynthesis pathway. The polypeptide is Aspartate carbamoyltransferase catalytic subunit (Listeria welshimeri serovar 6b (strain ATCC 35897 / DSM 20650 / CCUG 15529 / CIP 8149 / NCTC 11857 / SLCC 5334 / V8)).